A 1377-amino-acid chain; its full sequence is Pleckstrin homology-like domain family B member 1 (1377 aa).

Position 51 is a phosphoserine (Ser51). Positions 64-125 (TVIGSAARDI…LTQGCMLCLG (62 aa)) constitute an FHA domain. Asymmetric dimethylarginine is present on Arg131. The segment at 150-187 (RAPGPPYSPVPAESESLVNGNHTPQTATRGPSACASHS) is disordered. Positions 165 to 178 (SLVNGNHTPQTATR) are enriched in polar residues. 3 positions are modified to phosphoserine: Ser192, Ser220, and Ser223. Disordered stretches follow at residues 211–334 (AAGK…LTDS) and 370–535 (GALS…GSFS). Positions 252–273 (SPAFSPLSSPASSGSCASHSPS) are enriched in low complexity. Positions 288-303 (RSSSYHLALQPPQSRP) are enriched in polar residues. Residues 309-322 (ESPRLSRKGGHERP) are compositionally biased toward basic and acidic residues. Phosphoserine is present on residues Ser324, Ser334, Ser381, Ser404, Ser430, Ser443, Ser461, Ser470, Ser489, and Ser501. The segment covering 456–473 (ELPPLSPSLSRRALSPLP) has biased composition (low complexity). Positions 481–491 (KLNREVAESPR) are enriched in basic and acidic residues. Arg512 carries the post-translational modification Omega-N-methylarginine. A phosphoserine mark is found at Ser518 and Ser520. The residue at position 522 (Thr522) is a Phosphothreonine. A phosphoserine mark is found at Ser533, Ser539, Ser551, Ser555, Ser563, Ser578, and Ser583. Over residues 653-663 (PSRGLAGASGR) the composition is skewed to low complexity. 3 disordered regions span residues 653–707 (PSRG…APST), 936–1019 (TGPA…GSLP), and 1119–1138 (SMET…DNMS). Basic and acidic residues predominate over residues 677-691 (ESMERSDEENLKEEC). Residue Ser678 is modified to Phosphoserine. Residues 683 to 809 (DEENLKEECS…TETKLFEDLE (127 aa)) adopt a coiled-coil conformation. 2 positions are modified to phosphoserine: Ser971 and Ser1017. The segment covering 971-992 (SPLPRTRSGPLPSSSGSSSSSS) has biased composition (low complexity). Residues 1009–1018 (LLTQNGTGSL) show a composition bias toward polar residues. Positions 1144–1208 (DMGKIEEMEK…ARRQQLVEKE (65 aa)) form a coiled coil. One can recognise a PH domain in the interval 1256–1370 (SKVCRGYLVK…WMDVIVTGAE (115 aa)).

The sequence is that of Pleckstrin homology-like domain family B member 1 (PHLDB1) from Homo sapiens (Human).